Consider the following 72-residue polypeptide: Protein CYSTEINE-RICH TRANSMEMBRANE MODULE 9 (72 aa).

Positions methionine 1–tyrosine 22 are enriched in polar residues. A disordered region spans residues methionine 1–glutamate 46. The helical transmembrane segment at serine 49–cysteine 65 threads the bilayer.

This sequence belongs to the CYSTM1 family. Heterodimers. Interacts with WIH1/CYSTM13. In terms of tissue distribution, mostly expressed in roots and flowers and, to a lower extent, in stems, siliques and leaves.

The protein resides in the cell membrane. The protein localises to the nucleus. Involved in resistance to abiotic stress. The polypeptide is Protein CYSTEINE-RICH TRANSMEMBRANE MODULE 9 (Arabidopsis thaliana (Mouse-ear cress)).